The following is a 118-amino-acid chain: Protein MGF 110-6L (118 aa).

The first 18 residues, 1–18 (MLVIFLGILGLLASQVSS), serve as a signal peptide directing secretion. An N-linked (GlcNAc...) asparagine; by host glycan is attached at asparagine 96. The Prevents secretion from ER signature appears at 115–118 (KDEL).

It belongs to the asfivirus MGF 110 family. N-glycosylated.

The protein resides in the host endoplasmic reticulum lumen. Functionally, plays a role in virus cell tropism, and may be required for efficient virus replication in macrophages. The polypeptide is Protein MGF 110-6L (African swine fever virus (isolate Tick/South Africa/Pretoriuskop Pr4/1996) (ASFV)).